A 326-amino-acid polypeptide reads, in one-letter code: tRNA-modifying protein YgfZ (326 aa).

The folate site is built by Trp27 and Trp189.

Belongs to the tRNA-modifying YgfZ family.

The protein resides in the cytoplasm. Folate-binding protein involved in regulating the level of ATP-DnaA and in the modification of some tRNAs. It is probably a key factor in regulatory networks that act via tRNA modification, such as initiation of chromosomal replication. This Escherichia coli O45:K1 (strain S88 / ExPEC) protein is tRNA-modifying protein YgfZ.